The primary structure comprises 640 residues: Biosynthetic arginine decarboxylase (640 aa).

Residue K109 is modified to N6-(pyridoxal phosphate)lysine. 291–301 lines the substrate pocket; sequence LDVGGGLGVDY.

The protein belongs to the Orn/Lys/Arg decarboxylase class-II family. SpeA subfamily. Mg(2+) is required as a cofactor. Requires pyridoxal 5'-phosphate as cofactor.

It carries out the reaction L-arginine + H(+) = agmatine + CO2. It functions in the pathway amine and polyamine biosynthesis; agmatine biosynthesis; agmatine from L-arginine: step 1/1. Its function is as follows. Catalyzes the biosynthesis of agmatine from arginine. The polypeptide is Biosynthetic arginine decarboxylase (Synechococcus sp. (strain RCC307)).